The primary structure comprises 108 residues: uncharacterized protein (108 aa).

It belongs to the baculoviridae 11 kDa protein family.

This is an uncharacterized protein from Orgyia pseudotsugata (Douglas-fir tussock moth).